The following is a 446-amino-acid chain: Na(+)/H(+) antiporter NhaA (446 aa).

A run of 11 helical transmembrane segments spans residues 23–43 (GGML…SPWG), 73–93 (LMTF…GLEI), 109–129 (LLPI…YYFM), 138–158 (GLAI…SLFG), 167–187 (VFLT…IALF), 193–213 (SVNY…GNFF), 219–239 (WFYI…GIHA), 314–334 (MVNY…SLTA), 348–368 (VLAG…WLVI), 381–401 (WVNL…SLFI), and 419–439 (GVIL…QFAL).

Belongs to the NhaA Na(+)/H(+) (TC 2.A.33) antiporter family.

The protein resides in the cell inner membrane. The catalysed reaction is Na(+)(in) + 2 H(+)(out) = Na(+)(out) + 2 H(+)(in). In terms of biological role, na(+)/H(+) antiporter that extrudes sodium in exchange for external protons. The chain is Na(+)/H(+) antiporter NhaA from Phocaeicola vulgatus (strain ATCC 8482 / DSM 1447 / JCM 5826 / CCUG 4940 / NBRC 14291 / NCTC 11154) (Bacteroides vulgatus).